Consider the following 177-residue polypeptide: Large ribosomal subunit protein uL6 (177 aa).

The protein belongs to the universal ribosomal protein uL6 family. In terms of assembly, part of the 50S ribosomal subunit.

This protein binds to the 23S rRNA, and is important in its secondary structure. It is located near the subunit interface in the base of the L7/L12 stalk, and near the tRNA binding site of the peptidyltransferase center. The polypeptide is Large ribosomal subunit protein uL6 (Pseudomonas fluorescens (strain Pf0-1)).